Here is a 460-residue protein sequence, read N- to C-terminus: 3'3'-cGAMP-specific phosphodiesterase 3 (460 aa).

The 162-residue stretch at 28–189 (PPEHCIRCCW…IPLFSRIALL (162 aa)) folds into the HD domain. The region spanning 260–455 (DDAYLECIVT…LPDEYTQLPH (196 aa)) is the HD-GYP domain. His317 and Asp318 together coordinate a divalent metal cation. Catalysis depends on Lys321, which acts as the Proton donor. Positions 346, 370, 371, and 399 each coordinate a divalent metal cation.

As to quaternary structure, monomer. Mn(2+) is required as a cofactor.

It carries out the reaction 3',3'-cGAMP + H2O = 5'-pApG-3' + H(+). Its function is as follows. Phosphodiesterase (PDE) that catalyzes the hydrolysis of 3'3'-cyclic GMP-AMP (3'3'-cGAMP), leading to linear 5'-pApG. Counteracts the function of the 3'3'-cGAMP synthase DncV, and is involved in the modulation of intracellular 3'3'-cGAMP levels. Enhances bacterial chemotaxis and inhibits intestinal colonization in vivo. Thus exerts a crucial role in regulating bacterial infectivity through catalyzing 3'3'-cGAMP degradation. Is specific for 3'3'-cGAMP since it cannot degrade other cGAMP linkage isomers (3'2'-, 2'3'-, and 2'2'-cGAMPs); is also able to hydrolyze c-di-GMP but not c-di-AMP. The sequence is that of 3'3'-cGAMP-specific phosphodiesterase 3 from Vibrio cholerae serotype O1 (strain ATCC 39315 / El Tor Inaba N16961).